The following is a 79-amino-acid chain: Methionine-rich peptide X (79 aa).

A signal peptide spans 1-22 (MKKLAAVMLTSCLMVAVGASFA). A disordered region spans residues 37-79 (KKDDMAKDEMKKDSMAKDGMKKDAMKKDAMMKKDGMTKDEMKK).

Protein is oxidized (possibly on Met residues) when cells are exposed to chlorite or hypochlorite; initially the protein is highly oxidized, by 50 minutes all protein is in the reduced form.

Its subcellular location is the periplasm. Functionally, serves as an oxidative stress sink, specifically for chlorite and hypochlorite. This Azospira oryzae (strain ATCC BAA-33 / DSM 13638 / PS) (Dechlorosoma suillum) protein is Methionine-rich peptide X.